A 433-amino-acid polypeptide reads, in one-letter code: sn-glycerol-3-phosphate-binding periplasmic protein UgpB (433 aa).

An N-terminal signal peptide occupies residues 1-25 (MFTRLITTSVLTGAIALTIGSQAFA). 7 residues coordinate sn-glycerol 3-phosphate: Y67, D91, S146, S273, G307, Y346, and R397.

Belongs to the bacterial solute-binding protein 1 family. The complex is composed of two ATP-binding proteins (UgpC), two transmembrane proteins (UgpA and UgpE) and a solute-binding protein (UgpB).

It is found in the periplasm. Its function is as follows. Part of the ABC transporter complex UgpBAEC involved in sn-glycerol-3-phosphate (G3P) import. Binds G3P. This chain is sn-glycerol-3-phosphate-binding periplasmic protein UgpB (ugpB), found in Brucella abortus (strain 2308).